The chain runs to 421 residues: MVSESHHEALAAPPATTVAAAPPSNVTEPASPGGGGGKEDAFSKLKEKFMNELNKIPLPPWALIAIAIVAVLLILTCCFCLCKKCLFKKKNKKKGKEKGGKNAINMKDVKDLGKTMKDQDDDAETGLTDGEEKEEPKEVEKLGKIQYSLDYDFQNNQLLVGIIQAAELPALDMGGTSDPYVKVFLLPDKKKKYETKVHRKTLNPVFNEQFTFKVPYSELGGKTLVMAVYDFDRFSKHDIIGEYKVAMNTVDFGHVTEEWRDLQSAEKEEQEKLGDICFSLRYVPTAGKLTVVILEAKNLKKMDVGGLSDPYVKIHLMQNGKRLKKKKTTIKKNTLNPYYNESFSFEVPFEQIQKVQIVVTVLDYDKIGKNDAIGKVFVGYNSTGAELRHWSDMLANPRRPIAQWHTLQPEEEVDAMLAVKK.

A disordered region spans residues 1-40; the sequence is MVSESHHEALAAPPATTVAAAPPSNVTEPASPGGGGGKED. At 1 to 60 the chain is on the vesicular side; the sequence is MVSESHHEALAAPPATTVAAAPPSNVTEPASPGGGGGKEDAFSKLKEKFMNELNKIPLPP. The span at 10–23 shows a compositional bias: low complexity; sequence LAAPPATTVAAAPP. Residue Asn-25 is glycosylated (N-linked (GlcNAc...) asparagine). Residues 61–81 form a helical membrane-spanning segment; it reads WALIAIAIVAVLLILTCCFCL. S-palmitoyl cysteine attachment occurs at residues Cys-77, Cys-78, Cys-80, Cys-82, and Cys-85. Residues 82–421 are Cytoplasmic-facing; the sequence is CKKCLFKKKN…EVDAMLAVKK (340 aa). The interval 94–139 is disordered; sequence KGKEKGGKNAINMKDVKDLGKTMKDQDDDAETGLTDGEEKEEPKEV. Residues 107-118 show a composition bias toward basic and acidic residues; the sequence is KDVKDLGKTMKD. Acidic residues predominate over residues 119–133; sequence QDDDAETGLTDGEEK. The tract at residues 135-381 is phospholipid binding; that stretch reads EPKEVEKLGK…AIGKVFVGYN (247 aa). 2 C2 domains span residues 141–260 and 272–405; these read KLGK…EEWR and KLGD…AQWH. Residues Leu-171, Asp-172, Asp-178, Asp-230, Phe-231, Asp-232, Ser-235, Lys-236, Asp-238, Asp-303, Asp-309, Asp-363, Asp-365, and Asp-371 each contribute to the Ca(2+) site.

It belongs to the synaptotagmin family. Homotetramer. It depends on Ca(2+) as a cofactor.

It localises to the cytoplasmic vesicle. The protein localises to the secretory vesicle membrane. Its subcellular location is the secretory vesicle. The protein resides in the synaptic vesicle membrane. It is found in the chromaffin granule membrane. It localises to the cytoplasm. Its function is as follows. Calcium sensor that participates in triggering neurotransmitter release at the synapse. May have a regulatory role in the membrane interactions during trafficking of synaptic vesicles at the active zone of the synapse. It binds acidic phospholipids with a specificity that requires the presence of both an acidic head group and a diacyl backbone. May play a role in dendrite formation by melanocytes. May play a role in regulating the secretion of hormones relevant to the reproduction and egg-laying of female geese. The sequence is that of Synaptotagmin-1 from Anser cygnoides (Swan goose).